We begin with the raw amino-acid sequence, 210 residues long: Dephospho-CoA kinase (210 aa).

One can recognise a DPCK domain in the interval 18–210 (RIGITGGIAS…LSYPQVEVLL (193 aa)). Position 26–31 (26–31 (ASGKTS)) interacts with ATP.

This sequence belongs to the CoaE family.

The protein localises to the cytoplasm. The catalysed reaction is 3'-dephospho-CoA + ATP = ADP + CoA + H(+). The protein operates within cofactor biosynthesis; coenzyme A biosynthesis; CoA from (R)-pantothenate: step 5/5. Functionally, catalyzes the phosphorylation of the 3'-hydroxyl group of dephosphocoenzyme A to form coenzyme A. This chain is Dephospho-CoA kinase, found in Prochlorococcus marinus (strain SARG / CCMP1375 / SS120).